Reading from the N-terminus, the 185-residue chain is Photosystem I assembly protein Ycf4 (185 aa).

The next 2 helical transmembrane spans lie at 24–44 (YIIG…SISS) and 66–86 (IIMG…WYLV).

The protein belongs to the Ycf4 family.

It localises to the cellular thylakoid membrane. Seems to be required for the assembly of the photosystem I complex. This is Photosystem I assembly protein Ycf4 from Prochlorococcus marinus (strain MIT 9301).